The chain runs to 87 residues: Small ribosomal subunit protein bS20 (87 aa).

Positions 1–20 (MANIKSQIKRNKTNEKARLR) are disordered.

This sequence belongs to the bacterial ribosomal protein bS20 family.

Binds directly to 16S ribosomal RNA. The sequence is that of Small ribosomal subunit protein bS20 from Corynebacterium efficiens (strain DSM 44549 / YS-314 / AJ 12310 / JCM 11189 / NBRC 100395).